The primary structure comprises 180 residues: uncharacterized protein (180 aa).

An N-terminal signal peptide occupies residues 1–30; the sequence is MRHKIITFILAVVVIIIIGNMIGGGGGSEA. The disordered stretch occupies residues 25-46; the sequence is GGGSEATSKTSSSSKAETEKTY. Low complexity predominate over residues 29-39; that stretch reads EATSKTSSSSK.

Its subcellular location is the secreted. This is an uncharacterized protein from Bacillus subtilis (strain 168).